A 105-amino-acid chain; its full sequence is Large ribosomal subunit protein uL24 (105 aa).

Belongs to the universal ribosomal protein uL24 family. Part of the 50S ribosomal subunit.

In terms of biological role, one of two assembly initiator proteins, it binds directly to the 5'-end of the 23S rRNA, where it nucleates assembly of the 50S subunit. One of the proteins that surrounds the polypeptide exit tunnel on the outside of the subunit. The protein is Large ribosomal subunit protein uL24 of Lachnoclostridium phytofermentans (strain ATCC 700394 / DSM 18823 / ISDg) (Clostridium phytofermentans).